Reading from the N-terminus, the 426-residue chain is Serine--tRNA ligase (426 aa).

Residue 233-235 coordinates L-serine; it reads TAE. 264–266 is an ATP binding site; it reads RSE. Glu-287 serves as a coordination point for L-serine. An ATP-binding site is contributed by 351–354; it reads EISS. L-serine is bound at residue Ser-387.

The protein belongs to the class-II aminoacyl-tRNA synthetase family. Type-1 seryl-tRNA synthetase subfamily. Homodimer. The tRNA molecule binds across the dimer.

The protein resides in the cytoplasm. The catalysed reaction is tRNA(Ser) + L-serine + ATP = L-seryl-tRNA(Ser) + AMP + diphosphate + H(+). It carries out the reaction tRNA(Sec) + L-serine + ATP = L-seryl-tRNA(Sec) + AMP + diphosphate + H(+). Its pathway is aminoacyl-tRNA biosynthesis; selenocysteinyl-tRNA(Sec) biosynthesis; L-seryl-tRNA(Sec) from L-serine and tRNA(Sec): step 1/1. Catalyzes the attachment of serine to tRNA(Ser). Is also able to aminoacylate tRNA(Sec) with serine, to form the misacylated tRNA L-seryl-tRNA(Sec), which will be further converted into selenocysteinyl-tRNA(Sec). The polypeptide is Serine--tRNA ligase (Clostridium botulinum (strain Loch Maree / Type A3)).